The primary structure comprises 88 residues: Putative membrane protein insertion efficiency factor (88 aa).

A disordered region spans residues 68–88; it reads VPPPNSDTRARGEADARSHRL. Over residues 75–88 the composition is skewed to basic and acidic residues; it reads TRARGEADARSHRL.

The protein belongs to the UPF0161 family.

The protein resides in the cell inner membrane. Functionally, could be involved in insertion of integral membrane proteins into the membrane. The chain is Putative membrane protein insertion efficiency factor from Burkholderia ambifaria (strain MC40-6).